The primary structure comprises 908 residues: WD repeat-containing protein 44 (908 aa).

The tract at residues 1-163 (MMPLKMCTWG…SSADQLDASK (163 aa)) is binding activity. A phosphoserine mark is found at Ser17, Ser40, Ser61, Ser71, Ser86, and Ser116. Polar residues-rich tracts occupy residues 108–120 (QQGS…QNAA) and 148–157 (NNLTEVSSAD). 5 disordered regions span residues 108–158 (QQGS…SADQ), 202–273 (APAK…KDNI), 309–341 (TAQE…RELT), 391–418 (VSND…RLKQ), and 454–474 (DEVF…GMPY). Thr151 and Thr211 each carry phosphothreonine. Residues 203–249 (PAKPPRHLTPEPDIVASTKKPVPARPPPPTNFPPPRPPPPSRPAPPP) form an important for interaction with ARHGAP26 AND ARHGAP10 region. Residues 225 to 248 (PARPPPPTNFPPPRPPPPSRPAPP) are compositionally biased toward pro residues. Ser254 carries the post-translational modification Phosphoserine. Basic and acidic residues predominate over residues 254–270 (SDLEFEALKTPDLDVPK). At Thr263 the chain carries Phosphothreonine. An important for interaction with RAB11A region spans residues 326–339 (VMGPQRPRSNSGRE). A phosphoserine mark is found at Ser334 and Ser336. 2 positions are modified to phosphothreonine: Thr341 and Thr396. Residues Ser398, Ser465, Ser466, and Ser467 each carry the phosphoserine modification. Residues 462 to 471 (DDPSSSDDEG) are compositionally biased toward acidic residues. Residue Tyr474 is modified to Phosphotyrosine. One copy of the WD 1 repeat lies at 504–543 (EHMGAVWTMKFSHCGRLLASAGQDNIVRIWALKNAFDYFN). The segment at 552 to 587 (EGRVSPSPSQESLSSSKSDTDMGVCSGTDEDPDDKN) is disordered. A phosphoserine mark is found at Ser556 and Ser560. Low complexity predominate over residues 556–568 (SPSPSQESLSSSK). WD repeat units follow at residues 600–638 (GHTA…CLCC), 640–680 (QHID…VALW), 685–724 (GQTK…YHTQ), 735–774 (KVGR…LSMK), and 779–818 (VNSS…SKFT).

Interacts preferentially with the GTP-bound form of RAB11 when membrane-associated. Interacts with GRAF1/ARHGAP26 or GRAF2/ARHGAP10; the interaction connects the endoplasmic reticulum (ER) with the endosomal tubule. Interacts with VAPA (via MSP domain) or VAPB (via MSP domain); the interaction connects the ER with the endosomal tubule. Does not bind to other Rab and Rho small G proteins. Phosphorylated by ATK1; the phosphorylation stabilizes its interaction with RAB11A and RAB11B. Expressed in heart; brain; spleen; lung; liver; muscle and kidney.

The protein resides in the cytoplasm. It is found in the cytosol. The protein localises to the perinuclear region. Its subcellular location is the endosome membrane. It localises to the golgi apparatus. The protein resides in the trans-Golgi network. Its function is as follows. Downstream effector for Rab11 which regulates Rab11 intracellular membrane trafficking functions such as endocytic recycling, intracellular ciliogenesis and protein export. ATK1-mediated phosphorylation of WDR44 induces binding to Rab11 which activates endocytic recycling of transferrin receptor back to the plasma membrane. When bound to Rab11, prevents the formation of the ciliogenic Rab11-Rabin8/RAB3IP-RAB11FIP3 complex, therefore inhibiting preciliary trafficking and ciliogenesis. May participate in neo-synthesized protein export by connecting the endoplasmic reticulum (ER) with the endosomal tubule via direct interactions with the integral ER proteins VAPA or VAPB and the endosomal protein GRAFs (GRAF1/ARHGAP26 or GRAF2/ARHGAP10), which facilitates the transfer of proteins such as E-cadherin, MPP14 and CFTR into a Rab8-Rab10-Rab11-dependent export route. This is WD repeat-containing protein 44 from Rattus norvegicus (Rat).